Reading from the N-terminus, the 211-residue chain is Xanthine phosphoribosyltransferase (211 aa).

Positions 31 and 38 each coordinate xanthine. 5-phospho-alpha-D-ribose 1-diphosphate is bound at residue 138–142; sequence ANGRT. K166 contributes to the xanthine binding site.

This sequence belongs to the purine/pyrimidine phosphoribosyltransferase family. Xpt subfamily. In terms of assembly, homodimer.

It localises to the cytoplasm. It catalyses the reaction XMP + diphosphate = xanthine + 5-phospho-alpha-D-ribose 1-diphosphate. It functions in the pathway purine metabolism; XMP biosynthesis via salvage pathway; XMP from xanthine: step 1/1. Its function is as follows. Converts the preformed base xanthine, a product of nucleic acid breakdown, to xanthosine 5'-monophosphate (XMP), so it can be reused for RNA or DNA synthesis. The sequence is that of Xanthine phosphoribosyltransferase from Chloroflexus aurantiacus (strain ATCC 29364 / DSM 637 / Y-400-fl).